The following is a 354-amino-acid chain: MGIGISSESKESAKRSKELEKKLQEDAERDARTVKLLLLGAGESGKSTIVKQMKIIHKNGYSEQECMEFKAVIYSNTLQSILAIVKAMATLEIDYVNPRSAEDQQQLCAMANTLEDGSMTPELAEIIKRLWRDPGVQACFERASEYQLNDSAAYYLNDLDRIAAPGYVPNEQDVLHSRVKTTGIIETQFSFKDLHFRMFDVGGQRSERKKWIHCFEGVTCIIFCAALSAYDMVLVEDEEVNRMHESLHLFNSICNHKYFATTSIVLFLNKKDLFQEKVTKVHLSICFPEYTGPNTFEDAGNYIKNQFLDLNLKKEDKEIYSHMTCATDTQNVKFVFDAVTDIIIKENLKDCGLF.

The interval 1–26 is disordered; it reads MGIGISSESKESAKRSKELEKKLQED. G2 is lipidated: N-myristoyl glycine. The segment covering 8-26 has biased composition (basic and acidic residues); the sequence is ESKESAKRSKELEKKLQED. The G-alpha domain maps to 32-354; sequence RTVKLLLLGA…KENLKDCGLF (323 aa). Residues 35-48 are G1 motif; that stretch reads KLLLLGAGESGKST. Residues 40-47, 175-181, 200-204, 269-272, and A326 each bind GTP; these read GAGESGKS, LHSRVKT, DVGGQ, and NKKD. Positions 47 and 181 each coordinate Mg(2+). Residues 173-181 are G2 motif; the sequence is DVLHSRVKT. Residues 196 to 205 form a G3 motif region; it reads FRMFDVGGQR. Residues 265–272 are G4 motif; it reads VLFLNKKD. A G5 motif region spans residues 324–329; the sequence is TCATDT.

The protein belongs to the G-alpha family. G(i/o/t/z) subfamily. In terms of assembly, g proteins are composed of 3 units; alpha, beta and gamma, respectively GNAT3, GNB1 and GNG13 for Gustducin heterotrimer for bitter taste transduction. The alpha chain contains the guanine nucleotide binding site. Component of the TAS2R14-GNAT3 complex, consisting of TAS2R14, GNAT3, GNB1 and GNG2; within the complex interacts with TAS2R14; this complex plays a role in the perception of bitterness. Gustducin heterotrimer may also be composed of GNAT3, GNB3 and GNG13. As to expression, expressed in epithelial cells of taste buds of the circumvallate, foliate and fungiform. Detected in various region of the respiratory track. Expressed also in spermatozoa.

It is found in the cytoplasm. Its function is as follows. Guanine nucleotide-binding protein (G protein) alpha subunit playing a prominent role in bitter and sweet taste transduction as well as in umami (monosodium glutamate, monopotassium glutamate, and inosine monophosphate) taste transduction. The polypeptide is Guanine nucleotide-binding protein G(t) subunit alpha-3 (GNAT3) (Bos taurus (Bovine)).